The chain runs to 293 residues: Ribosomal protein L11 methyltransferase (293 aa).

S-adenosyl-L-methionine contacts are provided by T145, G166, D188, and N230.

This sequence belongs to the methyltransferase superfamily. PrmA family.

The protein localises to the cytoplasm. The enzyme catalyses L-lysyl-[protein] + 3 S-adenosyl-L-methionine = N(6),N(6),N(6)-trimethyl-L-lysyl-[protein] + 3 S-adenosyl-L-homocysteine + 3 H(+). In terms of biological role, methylates ribosomal protein L11. The chain is Ribosomal protein L11 methyltransferase from Salmonella arizonae (strain ATCC BAA-731 / CDC346-86 / RSK2980).